The sequence spans 477 residues: Glycogen synthase (477 aa).

Lys-15 contributes to the ADP-alpha-D-glucose binding site.

The protein belongs to the glycosyltransferase 1 family. Bacterial/plant glycogen synthase subfamily.

It catalyses the reaction [(1-&gt;4)-alpha-D-glucosyl](n) + ADP-alpha-D-glucose = [(1-&gt;4)-alpha-D-glucosyl](n+1) + ADP + H(+). Its pathway is glycan biosynthesis; glycogen biosynthesis. Its function is as follows. Synthesizes alpha-1,4-glucan chains using ADP-glucose. The sequence is that of Glycogen synthase from Streptococcus pneumoniae serotype 19F (strain G54).